A 122-amino-acid chain; its full sequence is Yop proteins translocation protein X (122 aa).

Positions 71–87 (HRAQDYRRELDTLQSLL) form a coiled coil.

Interacts with YscY.

The protein resides in the secreted. Required for Yop secretion. The protein is Yop proteins translocation protein X (yscX) of Yersinia enterocolitica.